Consider the following 179-residue polypeptide: Large ribosomal subunit protein uL5 (179 aa).

The protein belongs to the universal ribosomal protein uL5 family. Part of the 50S ribosomal subunit; part of the 5S rRNA/L5/L18/L25 subcomplex. Contacts the 5S rRNA and the P site tRNA. Forms a bridge to the 30S subunit in the 70S ribosome.

This is one of the proteins that bind and probably mediate the attachment of the 5S RNA into the large ribosomal subunit, where it forms part of the central protuberance. In the 70S ribosome it contacts protein S13 of the 30S subunit (bridge B1b), connecting the 2 subunits; this bridge is implicated in subunit movement. Contacts the P site tRNA; the 5S rRNA and some of its associated proteins might help stabilize positioning of ribosome-bound tRNAs. In Clostridium novyi (strain NT), this protein is Large ribosomal subunit protein uL5.